A 140-amino-acid chain; its full sequence is Large ribosomal subunit protein bL17 (140 aa).

It belongs to the bacterial ribosomal protein bL17 family. Part of the 50S ribosomal subunit. Contacts protein L32.

The protein is Large ribosomal subunit protein bL17 of Hyphomonas neptunium (strain ATCC 15444).